Consider the following 426-residue polypeptide: Elongation factor 1-alpha (426 aa).

One can recognise a tr-type G domain in the interval 5–221; the sequence is KPHMNLAVIG…DTFKEPDKPT (217 aa). Residues 14–21 are G1; sequence GHIDHGKS. 14–21 contributes to the GTP binding site; that stretch reads GHIDHGKS. Ser-21 is a binding site for Mg(2+). A G2 region spans residues 70–74; it reads GITID. The segment at 91–94 is G3; it reads DCPG. GTP-binding positions include 91 to 95 and 146 to 149; these read DCPGH and NKMD. Residues 146 to 149 form a G4 region; that stretch reads NKMD. Residues 185 to 187 are G5; that stretch reads SSF.

Belongs to the TRAFAC class translation factor GTPase superfamily. Classic translation factor GTPase family. EF-Tu/EF-1A subfamily.

The protein localises to the cytoplasm. It catalyses the reaction GTP + H2O = GDP + phosphate + H(+). GTP hydrolase that promotes the GTP-dependent binding of aminoacyl-tRNA to the A-site of ribosomes during protein biosynthesis. The sequence is that of Elongation factor 1-alpha from Methanosphaerula palustris (strain ATCC BAA-1556 / DSM 19958 / E1-9c).